The chain runs to 160 residues: Transcription elongation factor GreB (160 aa).

It belongs to the GreA/GreB family. GreB subfamily.

Its function is as follows. Necessary for efficient RNA polymerase transcription elongation past template-encoded arresting sites. The arresting sites in DNA have the property of trapping a certain fraction of elongating RNA polymerases that pass through, resulting in locked ternary complexes. Cleavage of the nascent transcript by cleavage factors such as GreA or GreB allows the resumption of elongation from the new 3'terminus. GreB releases sequences of up to 9 nucleotides in length. The sequence is that of Transcription elongation factor GreB from Vibrio vulnificus (strain CMCP6).